The chain runs to 346 residues: Deoxyhypusine hydroxylase (346 aa).

HEAT-like PBS-type repeat units lie at residues 71–100, 104–133, 213–242, 246–275, and 279–320; these read VLLR…LNDT, LMVR…LNDE, LKLR…LIKD, AIFR…LQNV, and EMVR…SKDA. Fe cation is bound by residues H75, H108, and E109. 3 residues coordinate Fe cation: H250, H283, and E284.

Belongs to the deoxyhypusine hydroxylase family. Fe(2+) serves as cofactor.

It carries out the reaction [eIF5A protein]-deoxyhypusine + AH2 + O2 = [eIF5A protein]-hypusine + A + H2O. The protein operates within protein modification; eIF5A hypusination. Catalyzes the hydroxylation of the N(6)-(4-aminobutyl)-L-lysine intermediate produced by deoxyhypusine synthase/DHPS on a critical lysine of the eukaryotic translation initiation factor 5A/eIF-5A. This is the second step of the post-translational modification of that lysine into an unusual amino acid residue named hypusine. Hypusination is unique to mature eIF-5A factor and is essential for its function. This is Deoxyhypusine hydroxylase from Plasmodium vivax (strain Salvador I).